The chain runs to 838 residues: MGELFRSEEMTLAQLFLQSEAAYCCVSELGELGKVQFRDLNPDVNVFQRKFVNEVRRCEEMDRKLRFVEKEIKKANIPIMDTGENPEVPFPRDMIDLEANFEKIENELKEINTNQEALKRNFLELTELKFILRKTQQFFDEMADPDLLEESSSLLEPSEMGRGAPLRLGFVAGVINRERIPTFERMLWRVCRGNVFLRQAEIENPLEDPVTGDYVHKSVFIIFFQGDQLKNRVKKICEGFRASLYPCPETPQERKEMASGVNTRIDDLQMVLNQTEDHRQRVLQAAAKNIRVWFIKVRKMKAIYHTLNLCNIDVTQKCLSAEVWCPVADLDSIQFALRRGTEHSGSTVPSILNRMQTNQTPPTYNKTNKFTCGFQNIVDAYGIGTYREINPAPYTIITFPFLFAVMFGDFGHGILMTLIAIWMVLRESRILSQKSDNEMFSTVFSGRYIILLMGLFSTYTGLIYNDCFSKSLNMFGSSWSVRPMFSKANWSDELLKTTPLLQLDPAEAGVFGGPYPFGIDPIWNIANNKLAFLNSFKMKMSVILGIIHMLFGVMLSLLNHIYFKKPLNIYLGFIPEMIFMSSLFGYLVILIFYKWTAYDAHTSKEAPSPLIHFINMFLFSYGDTSNKMLYRGQKGIQCFLVVVALLCVPWMLVAKPLVLRHQYLRRKHLGTHNFGGIRVGNGPTEEDAEIIQHDQLSTHSEEGEEPTEDEVFDFADTVVYQAIHTIEYCLGCISNTASYLRLWALSLAHAQLSEVLWTMVIHTGLSVRSLAGGFGLVFIFAAFATLTVAILLVMEGLSAFLHALRLHWIEFQNKFYTGTGFKFLPFSFDPIREGKFDD.

The Cytoplasmic portion of the chain corresponds to 1-388 (MGELFRSEEM…DAYGIGTYRE (388 aa)). A helical transmembrane segment spans residues 389 to 407 (INPAPYTIITFPFLFAVMF). Residues 408–409 (GD) are Vacuolar-facing. The chain crosses the membrane as a helical span at residues 410–426 (FGHGILMTLIAIWMVLR). Over 427–441 (ESRILSQKSDNEMFS) the chain is Cytoplasmic. The chain crosses the membrane as a helical span at residues 442-471 (TVFSGRYIILLMGLFSTYTGLIYNDCFSKS). At 472-535 (LNMFGSSWSV…ANNKLAFLNS (64 aa)) the chain is on the vacuolar side. The helical transmembrane segment at 536-555 (FKMKMSVILGIIHMLFGVML) threads the bilayer. At 556 to 573 (SLLNHIYFKKPLNIYLGF) the chain is on the cytoplasmic side. The helical transmembrane segment at 574 to 594 (IPEMIFMSSLFGYLVILIFYK) threads the bilayer. The Vacuolar portion of the chain corresponds to 595–639 (WTAYDAHTSKEAPSPLIHFINMFLFSYGDTSNKMLYRGQKGIQCF). The helical transmembrane segment at 640-659 (LVVVALLCVPWMLVAKPLVL) threads the bilayer. The Cytoplasmic segment spans residues 660 to 725 (RHQYLRRKHL…DTVVYQAIHT (66 aa)). The chain crosses the membrane as a helical span at residues 726 to 750 (IEYCLGCISNTASYLRLWALSLAHA). Residues 751-771 (QLSEVLWTMVIHTGLSVRSLA) lie on the Vacuolar side of the membrane. A helical transmembrane segment spans residues 772-810 (GGFGLVFIFAAFATLTVAILLVMEGLSAFLHALRLHWIE). Topologically, residues 811 to 838 (FQNKFYTGTGFKFLPFSFDPIREGKFDD) are cytoplasmic.

This sequence belongs to the V-ATPase 116 kDa subunit family. In terms of assembly, V-ATPase is a heteromultimeric enzyme made up of two complexes: the ATP-hydrolytic V1 complex and the proton translocation V0 complex. The V1 complex consists of three catalytic AB heterodimers that form a heterohexamer, three peripheral stalks each consisting of EG heterodimers, one central rotor including subunits D and F, and the regulatory subunits C and H. The proton translocation complex V0 consists of the proton transport subunit a, a ring of proteolipid subunits c9c'', rotary subunit d, subunits e and f, and two accessory subunits. As to expression, detected in brain (at protein level). Highest expression in brain, intermediate levels in kidney, and relatively low levels in bone and liver.

The protein localises to the cytoplasmic vesicle. It localises to the clathrin-coated vesicle membrane. Its subcellular location is the secretory vesicle. The protein resides in the synaptic vesicle membrane. It is found in the melanosome. Functionally, subunit of the V0 complex of vacuolar(H+)-ATPase (V-ATPase), a multisubunit enzyme composed of a peripheral complex (V1) that hydrolyzes ATP and a membrane integral complex (V0) that translocates protons. V-ATPase is responsible for acidifying and maintaining the pH of intracellular compartments and in some cell types, is targeted to the plasma membrane, where it is responsible for acidifying the extracellular environment. Required for assembly and activity of the vacuolar ATPase. The chain is V-type proton ATPase 116 kDa subunit a 1 (ATP6V0A1) from Gallus gallus (Chicken).